We begin with the raw amino-acid sequence, 429 residues long: Enolase (429 aa).

Glutamine 162 lines the (2R)-2-phosphoglycerate pocket. The active-site Proton donor is the glutamate 204. Aspartate 241, glutamate 283, and aspartate 310 together coordinate Mg(2+). Residues lysine 335, arginine 364, serine 365, and lysine 386 each coordinate (2R)-2-phosphoglycerate. The Proton acceptor role is filled by lysine 335.

Belongs to the enolase family. The cofactor is Mg(2+).

It is found in the cytoplasm. It localises to the secreted. The protein resides in the cell surface. The catalysed reaction is (2R)-2-phosphoglycerate = phosphoenolpyruvate + H2O. The protein operates within carbohydrate degradation; glycolysis; pyruvate from D-glyceraldehyde 3-phosphate: step 4/5. In terms of biological role, catalyzes the reversible conversion of 2-phosphoglycerate (2-PG) into phosphoenolpyruvate (PEP). It is essential for the degradation of carbohydrates via glycolysis. The protein is Enolase of Mycobacterium leprae (strain TN).